A 171-amino-acid polypeptide reads, in one-letter code: ATP synthase subunit b (171 aa).

The helical transmembrane segment at 13–33 (GVEWGTTFVTLVTFVILIILL) threads the bilayer.

It belongs to the ATPase B chain family. F-type ATPases have 2 components, F(1) - the catalytic core - and F(0) - the membrane proton channel. F(1) has five subunits: alpha(3), beta(3), gamma(1), delta(1), epsilon(1). F(0) has three main subunits: a(1), b(2) and c(10-14). The alpha and beta chains form an alternating ring which encloses part of the gamma chain. F(1) is attached to F(0) by a central stalk formed by the gamma and epsilon chains, while a peripheral stalk is formed by the delta and b chains.

Its subcellular location is the cell membrane. In terms of biological role, f(1)F(0) ATP synthase produces ATP from ADP in the presence of a proton or sodium gradient. F-type ATPases consist of two structural domains, F(1) containing the extramembraneous catalytic core and F(0) containing the membrane proton channel, linked together by a central stalk and a peripheral stalk. During catalysis, ATP synthesis in the catalytic domain of F(1) is coupled via a rotary mechanism of the central stalk subunits to proton translocation. Component of the F(0) channel, it forms part of the peripheral stalk, linking F(1) to F(0). The polypeptide is ATP synthase subunit b (Staphylococcus epidermidis (strain ATCC 12228 / FDA PCI 1200)).